The following is a 524-amino-acid chain: Methyl-CpG-binding domain-containing protein 8 (524 aa).

Over residues 45 to 60 the composition is skewed to low complexity; it reads CSSLSPSSSASLAASA. The interval 45–151 is disordered; it reads CSSLSPSSSA…EEELEDNEGQ (107 aa). Positions 75–84 are enriched in polar residues; that stretch reads FNESAGSRKQ. The segment covering 106–116 has biased composition (basic and acidic residues); it reads RQRDDSSREEQ. Acidic residues predominate over residues 136–149; that stretch reads EEEDEGEEELEDNE. The 73-residue stretch at 334-406 folds into the MBD domain; it reads VVNACDYGGY…QHYYLQSDNK (73 aa).

Expressed in shoot meristems, roots (vasculature and tips), hypocotyls (vasculature), cotyledons (vasculature and hydathodes), young leaves, buds, flowers and stems. Detected in stomata.

It localises to the nucleus. Its function is as follows. Probable transcriptional regulator. May regulates developmental traits such as flowering time. The protein is Methyl-CpG-binding domain-containing protein 8 (MBD8) of Arabidopsis thaliana (Mouse-ear cress).